The primary structure comprises 124 residues: MKSAFKSEFPFEKRKAESERIVQKFHNRIPVICERGGKSDIPDIDKRKYLVPGDLTVGQFVYVIRKRIKLPAEKAIFIFVNDTLPPTAALMSSIYQHHKDKDGFLYVSYSSENTFGGAGPLLEK.

Gly-116 carries Phosphatidylethanolamine amidated glycine lipidation. Residues 117–124 constitute a propeptide, removed in mature form; the sequence is GAGPLLEK.

Belongs to the ATG8 family. As to quaternary structure, conjugation to phosphatidylethanolamine (PE) leads to homodimerization. Interacts with ATG1, ATG3, ATG4, ATG7 and ATG12. Post-translationally, the C-terminal 8 residues of ATG8 are removed by ATG4 to expose Gly-116 at the C-terminus. This Gly-116 forms then a thioester bond with the 'Cys-550' of ATG7 (E1-like activating enzyme) before being transferred to the 'Cys-244' of ATG3 (the specific E2 conjugating enzyme), in order to be finally amidated with phosphatidylethanolamine. This lipid modification anchors ATG8 to membranes and can be reversed by ATG4, releasing soluble ATG8.

It is found in the cytoplasmic vesicle. The protein resides in the cvt vesicle membrane. Its subcellular location is the autophagosome membrane. It localises to the vacuole membrane. Its function is as follows. Ubiquitin-like modifier involved in cytoplasm to vacuole transport (Cvt) vesicles and autophagosome formation. With ATG4, mediates the delivery of the vesicles and autophagosomes to the vacuole via the microtubule cytoskeleton. Required for selective autophagic degradation of the nucleus (nucleophagy) as well as for mitophagy which contributes to regulate mitochondrial quantity and quality by eliminating the mitochondria to a basal level to fulfill cellular energy requirements and preventing excess ROS production. Also participates in membrane fusion events that take place in the early secretory pathway. Also involved in endoplasmic reticulum-specific autophagic process and is essential for the survival of cells subjected to severe ER stress. The ATG8-PE conjugate mediates tethering between adjacent membranes and stimulates membrane hemifusion, leading to expansion of the autophagosomal membrane during autophagy. Moreover not only conjugation, but also subsequent ATG8-PE deconjugation is an important step required to facilitate multiple events during macroautophagy, and especially for efficient autophagosome biogenesis, the assembly of ATG9-containing tubulovesicular clusters into phagophores/autophagosomes, and for the disassembly of PAS-associated ATG components. The chain is Autophagy-related protein 8 from Kluyveromyces marxianus (strain DMKU3-1042 / BCC 29191 / NBRC 104275) (Yeast).